The following is a 3329-amino-acid chain: Breast cancer type 2 susceptibility protein homolog (3329 aa).

The interaction with PALB2 stretch occupies residues 1-40 (MPVEYKRRPTFWEIFKARCSTADLGPISLNWFEELSSEAP). Disordered stretches follow at residues 37 to 69 (SEAPPYNSEPPEESEYKPHGYEPQLFKTPQRNP) and 207 to 241 (EARSSVTPADSPATLKSCFSNHNESPQKNDRSVPS). Ser435 and Ser481 each carry phosphoserine. A disordered region spans residues 628-650 (PDSSDKKRCLPNDPEEPSLTNSF). The interaction with NPM1 stretch occupies residues 628–979 (PDSSDKKRCL…DKWSEFLDPV (352 aa)). Ser735 is subject to Phosphoserine. The span at 934–953 (EKSRNNIEQHQKGTEDKDFK) shows a compositional bias: basic and acidic residues. Residues 934-965 (EKSRNNIEQHQKGTEDKDFKSNSSLNMKSDGN) are disordered. Positions 954 to 965 (SNSSLNMKSDGN) are enriched in polar residues. 2 BRCA2 repeats span residues 981-1015 (NHNFGGSFRTASNKEIKLSEHNVKKSKMFFKDIEE) and 1192-1226 (NEMEFGGFCSALGTKLSVSNEALRKAMKLFSDIEN). An interaction with RAD51 region spans residues 982–2035 (HNFGGSFRTA…LHKVKGMLEE (1054 aa)). Residues 1296–1340 (NTKHEDSYTSSQRNNLENSDGSMSSTSGPVYIHKGDSDLPADQGS) form a disordered region. The span at 1303–1323 (YTSSQRNNLENSDGSMSSTSG) shows a compositional bias: polar residues. 5 BRCA2 repeats span residues 1394-1428 (IKEFNISFQTASGKNTRVSKESLNKSVNIFNRETD), 1491-1525 (KEPTLLSFHTASGKKVKIMQESLDKVKNLFDETQY), 1623-1657 (TEDSALAYYTEDSRKTCVRESSLSKGRKWLREQGD), 1924-1958 (PSRTYGIFSTASGKAIQVSDASLEKARQVFSEMDG), and 2004-2038 (NSSVFSGFSTAGGKLVTVSESALHKVKGMLEEFDL). Ser2048 bears the Phosphoserine mark. Positions 2073–2099 (NSKLQKTYNDKSSLPSNYKESGSSGNT) are disordered. Residues 2074-2099 (SKLQKTYNDKSSLPSNYKESGSSGNT) show a composition bias toward polar residues. Residues 2219 to 2285 (KRGGVTVDAV…EPVTCGPFCS (67 aa)) are interaction with HSF2BP. The tract at residues 2298 to 2466 (TSPAQELLSK…SPKQLYIYGV (169 aa)) is interaction with FANCD2. The interval 2361–2393 (FHGDEHFNSKNVNLEGKNQKSTDGDREDGNDSH) is disordered. Residues 2377 to 2393 (KNQKSTDGDREDGNDSH) are compositionally biased toward basic and acidic residues. Residues 2402-2753 (MSSLQSARDL…QRVYPLQWVE (352 aa)) are interaction with SEM1. Positions 2603–2619 (AAKTLVLCISDIISPST) match the Nuclear export signal; masked by interaction with SEM1 motif. Ser3214 carries the phosphoserine; by CDK1 and CDK2 modification. Disordered regions lie at residues 3221-3257 (FQPPRSCGTKYATPIKKEPSSPRRRTPFQKTSGVSLP) and 3273-3329 (QALT…AVES). Ser3241 bears the Phosphoserine mark. A compositionally biased stretch (basic and acidic residues) spans 3309 to 3329 (SRKESLRDCRGDSSEKLAVES).

In terms of assembly, monomer and dimer. Interacts with RAD51; regulates RAD51 recruitment and function at sites of DNA repair. Interacts with SEM1, WDR16, USP11, DMC1, ROCK2 and NPM1. Interacts with both nonubiquitinated and monoubiquitinated FANCD2; this complex also includes XRCC3 and phosphorylated FANCG. Part of a BRCA complex containing BRCA1, BRCA2 and PALB2. Component of the homologous recombination repair (HR) complex composed of ERCC5/XPG, BRCA2, PALB2, DSS1 and RAD51. Within the complex, interacts with ERCC5/XPG and PALB2. Interacts directly with PALB2 which may serve as a scaffold for a HR complex containing PALB2, BRCA2, RAD51C, RAD51 and XRCC3. Interacts with BRCA1 only in the presence of PALB2 which serves as the bridging protein. Interacts with POLH; the interaction is direct. Interacts with the TREX-2 complex subunits PCID2 and SEM1. Interacts with HSF2BP and BRME1; the interaction with HSF2BP is direct and allows the formation of a ternary complex. The complex BRME1:HSF2BP:BRCA2 interacts with SPATA22, MEIOB and RAD51. Phosphorylated by ATM upon irradiation-induced DNA damage. Phosphorylation by CHEK1 and CHEK2 regulates interaction with RAD51. Phosphorylation at Ser-3291 by CDK1 and CDK2 is low in S phase when recombination is active, but increases as cells progress towards mitosis; this phosphorylation prevents homologous recombination-dependent repair during S phase and G2 by inhibiting RAD51 binding. In terms of processing, ubiquitinated in the absence of DNA damage; this does not lead to proteasomal degradation. In contrast, ubiquitination in response to DNA damage leads to proteasomal degradation. As to expression, widely expressed. Highest expression in cerebellum, testis, ileum, appendix, epididymis, ovary and mammary gland. No expression in lung.

Its subcellular location is the nucleus. It is found in the cytoplasm. The protein resides in the cytoskeleton. The protein localises to the microtubule organizing center. It localises to the centrosome. Involved in double-strand break repair and/or homologous recombination. Binds RAD51 and potentiates recombinational DNA repair by promoting assembly of RAD51 onto single-stranded DNA (ssDNA). Acts by targeting RAD51 to ssDNA over double-stranded DNA, enabling RAD51 to displace replication protein-A (RPA) from ssDNA and stabilizing RAD51-ssDNA filaments by blocking ATP hydrolysis. Part of a PALB2-scaffolded HR complex containing RAD51C and which is thought to play a role in DNA repair by HR. May participate in S phase checkpoint activation. Binds selectively to ssDNA, and to ssDNA in tailed duplexes and replication fork structures. May play a role in the extension step after strand invasion at replication-dependent DNA double-strand breaks; together with PALB2 is involved in both POLH localization at collapsed replication forks and DNA polymerization activity. In concert with NPM1, regulates centrosome duplication. Interacts with the TREX-2 complex (transcription and export complex 2) subunits PCID2 and SEM1, and is required to prevent R-loop-associated DNA damage and thus transcription-associated genomic instability, independently of its known role in homologous recombination. The sequence is that of Breast cancer type 2 susceptibility protein homolog from Mus musculus (Mouse).